Reading from the N-terminus, the 469-residue chain is Cysteine--tRNA ligase (469 aa).

Cysteine 33 serves as a coordination point for Zn(2+). Residues 35-45 carry the 'HIGH' region motif; it reads PTVYNLLHIGN. Zn(2+) contacts are provided by cysteine 214, histidine 239, and glutamate 243. Positions 271 to 275 match the 'KMSKS' region motif; sequence KMSKS. Lysine 274 contacts ATP.

It belongs to the class-I aminoacyl-tRNA synthetase family. As to quaternary structure, monomer. It depends on Zn(2+) as a cofactor.

The protein resides in the cytoplasm. The enzyme catalyses tRNA(Cys) + L-cysteine + ATP = L-cysteinyl-tRNA(Cys) + AMP + diphosphate. In Petrotoga mobilis (strain DSM 10674 / SJ95), this protein is Cysteine--tRNA ligase.